A 369-amino-acid chain; its full sequence is Phospho-N-acetylmuramoyl-pentapeptide-transferase (369 aa).

10 consecutive transmembrane segments (helical) span residues 2 to 22 (IALL…TPLF), 55 to 75 (TVVV…MWMM), 86 to 106 (GLLL…DDFI), 120 to 140 (AKLI…LQFP), 163 to 183 (LAFG…NLII), 196 to 216 (LDGL…IMGI), 239 to 259 (PMDL…FLWW), 266 to 286 (IFMG…FAIL), 291 to 311 (LLLA…IIQV), and 348 to 368 (ILAG…WVVL).

This sequence belongs to the glycosyltransferase 4 family. MraY subfamily. Mg(2+) serves as cofactor.

It localises to the cell membrane. The enzyme catalyses UDP-N-acetyl-alpha-D-muramoyl-L-alanyl-gamma-D-glutamyl-meso-2,6-diaminopimeloyl-D-alanyl-D-alanine + di-trans,octa-cis-undecaprenyl phosphate = di-trans,octa-cis-undecaprenyl diphospho-N-acetyl-alpha-D-muramoyl-L-alanyl-D-glutamyl-meso-2,6-diaminopimeloyl-D-alanyl-D-alanine + UMP. It functions in the pathway cell wall biogenesis; peptidoglycan biosynthesis. Catalyzes the initial step of the lipid cycle reactions in the biosynthesis of the cell wall peptidoglycan: transfers peptidoglycan precursor phospho-MurNAc-pentapeptide from UDP-MurNAc-pentapeptide onto the lipid carrier undecaprenyl phosphate, yielding undecaprenyl-pyrophosphoryl-MurNAc-pentapeptide, known as lipid I. The protein is Phospho-N-acetylmuramoyl-pentapeptide-transferase of Paenarthrobacter aurescens (strain TC1).